Reading from the N-terminus, the 333-residue chain is 4-hydroxy-2-oxovalerate aldolase (333 aa).

The Pyruvate carboxyltransferase domain maps to 3–253; the sequence is ILINDSTLRD…NTGIDLYHFL (251 aa). Residue 11–12 coordinates substrate; the sequence is RD. Asp-12 lines the Mn(2+) pocket. His-15 (proton acceptor) is an active-site residue. Substrate-binding residues include Ser-165 and His-192. Residues His-192 and His-194 each coordinate Mn(2+).

It belongs to the 4-hydroxy-2-oxovalerate aldolase family. In terms of assembly, interacts with MhpF.

It catalyses the reaction (S)-4-hydroxy-2-oxopentanoate = acetaldehyde + pyruvate. The protein operates within aromatic compound metabolism; 3-phenylpropanoate degradation. Functionally, catalyzes the retro-aldol cleavage of 4-hydroxy-2-oxopentanoate to pyruvate and acetaldehyde. Is involved in the meta-cleavage pathway for the degradation of aromatic compounds. This Serratia proteamaculans (strain 568) protein is 4-hydroxy-2-oxovalerate aldolase.